Here is a 461-residue protein sequence, read N- to C-terminus: tRNA modification GTPase MnmE (461 aa).

Residues Arg-27, Glu-89, and Arg-128 each contribute to the (6S)-5-formyl-5,6,7,8-tetrahydrofolate site. The TrmE-type G domain maps to 224–382; it reads GLATAIVGRP…LEELINKLFF (159 aa). Asn-234 is a K(+) binding site. GTP-binding positions include 234–239, 253–259, and 278–281; these read NVGKSS, TDVAGTT, and DTAG. Ser-238 contributes to the Mg(2+) binding site. Thr-253, Val-255, and Thr-258 together coordinate K(+). A Mg(2+)-binding site is contributed by Thr-259. Lys-461 serves as a coordination point for (6S)-5-formyl-5,6,7,8-tetrahydrofolate.

This sequence belongs to the TRAFAC class TrmE-Era-EngA-EngB-Septin-like GTPase superfamily. TrmE GTPase family. Homodimer. Heterotetramer of two MnmE and two MnmG subunits. Requires K(+) as cofactor.

It is found in the cytoplasm. In terms of biological role, exhibits a very high intrinsic GTPase hydrolysis rate. Involved in the addition of a carboxymethylaminomethyl (cmnm) group at the wobble position (U34) of certain tRNAs, forming tRNA-cmnm(5)s(2)U34. This chain is tRNA modification GTPase MnmE, found in Lactobacillus helveticus (strain DPC 4571).